The sequence spans 262 residues: Cyclin-dependent kinase inhibitor 1 (262 aa).

The segment at 140-212 is disordered; that stretch reads SDVAEAGSEH…SAQQATRPKI (73 aa). Basic and acidic residues predominate over residues 160–169; the sequence is SGRDRERRET. Low complexity predominate over residues 198 to 208; it reads SAATASAQQAT.

The protein belongs to the CDI family. ICK/KRP subfamily. As to expression, expressed in roots, stems, leaves and apex.

Functionally, regulates the production of endosperm cells, affecting seed filling and embryo development. Regulates endoreduplication of endosperm cells. May play a role in the exit from the mitotic cell cycle during rice grain formation. Inhibitis leaf elongation rates by decreasing cell number, that is partly compensated by increased cell size. May not affect growth rate or cell size of the primary root. This is Cyclin-dependent kinase inhibitor 1 (KRP1) from Oryza sativa subsp. japonica (Rice).